The primary structure comprises 208 residues: Cytochrome c oxidase assembly protein CtaG (208 aa).

The Cytoplasmic segment spans residues 1–19; it reads MKQRPTGPDTTPRNRRGFG. Residues 20–42 form a helical; Signal-anchor for type II membrane protein membrane-spanning segment; sequence RDTAVASVCGLVVALMVGASYAA. At 43 to 208 the chain is on the periplasmic side; sequence VPFYNWFCRV…SEAGPRQGAL (166 aa).

It belongs to the COX11/CtaG family.

Its subcellular location is the cell inner membrane. Exerts its effect at some terminal stage of cytochrome c oxidase synthesis, probably by being involved in the insertion of the copper B into subunit I. The protein is Cytochrome c oxidase assembly protein CtaG of Rhodopseudomonas palustris (strain BisA53).